The chain runs to 182 residues: ATP-dependent protease subunit HslV (182 aa).

Thr-10 is an active-site residue. Ala-166, Cys-169, and Ser-172 together coordinate Na(+).

It belongs to the peptidase T1B family. HslV subfamily. As to quaternary structure, a double ring-shaped homohexamer of HslV is capped on each side by a ring-shaped HslU homohexamer. The assembly of the HslU/HslV complex is dependent on binding of ATP.

It is found in the cytoplasm. The enzyme catalyses ATP-dependent cleavage of peptide bonds with broad specificity.. Its activity is regulated as follows. Allosterically activated by HslU binding. Protease subunit of a proteasome-like degradation complex believed to be a general protein degrading machinery. This is ATP-dependent protease subunit HslV from Rickettsia felis (strain ATCC VR-1525 / URRWXCal2) (Rickettsia azadi).